Here is a 471-residue protein sequence, read N- to C-terminus: tRNA-2-methylthio-N(6)-dimethylallyladenosine synthase (471 aa).

In terms of domain architecture, MTTase N-terminal spans K33 to E151. [4Fe-4S] cluster-binding residues include C42, C78, C112, C188, C192, and C195. In terms of domain architecture, Radical SAM core spans R174–E404. A TRAM domain is found at Q407 to Q470.

This sequence belongs to the methylthiotransferase family. MiaB subfamily. As to quaternary structure, monomer. Requires [4Fe-4S] cluster as cofactor.

It localises to the cytoplasm. The catalysed reaction is N(6)-dimethylallyladenosine(37) in tRNA + (sulfur carrier)-SH + AH2 + 2 S-adenosyl-L-methionine = 2-methylsulfanyl-N(6)-dimethylallyladenosine(37) in tRNA + (sulfur carrier)-H + 5'-deoxyadenosine + L-methionine + A + S-adenosyl-L-homocysteine + 2 H(+). Catalyzes the methylthiolation of N6-(dimethylallyl)adenosine (i(6)A), leading to the formation of 2-methylthio-N6-(dimethylallyl)adenosine (ms(2)i(6)A) at position 37 in tRNAs that read codons beginning with uridine. The chain is tRNA-2-methylthio-N(6)-dimethylallyladenosine synthase from Alkaliphilus oremlandii (strain OhILAs) (Clostridium oremlandii (strain OhILAs)).